The chain runs to 117 residues: Large ribosomal subunit protein bL19 (117 aa).

It belongs to the bacterial ribosomal protein bL19 family.

This protein is located at the 30S-50S ribosomal subunit interface and may play a role in the structure and function of the aminoacyl-tRNA binding site. The chain is Large ribosomal subunit protein bL19 from Desulfotalea psychrophila (strain LSv54 / DSM 12343).